The primary structure comprises 394 residues: Succinate--CoA ligase [ADP-forming] subunit beta 1 (394 aa).

Residues 9–237 form the ATP-grasp domain; it reads RDLFAKHDVP…KAAANPLEAA (229 aa). ATP is bound by residues K45, 52 to 54, E92, P95, and E100; that span reads GRG. The Mg(2+) site is built by N192 and D206. Substrate-binding positions include N257 and 319–321; that span reads GIT.

It belongs to the succinate/malate CoA ligase beta subunit family. As to quaternary structure, heterotetramer of two alpha and two beta subunits. It depends on Mg(2+) as a cofactor.

It catalyses the reaction succinate + ATP + CoA = succinyl-CoA + ADP + phosphate. The enzyme catalyses GTP + succinate + CoA = succinyl-CoA + GDP + phosphate. It participates in carbohydrate metabolism; tricarboxylic acid cycle; succinate from succinyl-CoA (ligase route): step 1/1. Its function is as follows. Succinyl-CoA synthetase functions in the citric acid cycle (TCA), coupling the hydrolysis of succinyl-CoA to the synthesis of either ATP or GTP and thus represents the only step of substrate-level phosphorylation in the TCA. The beta subunit provides nucleotide specificity of the enzyme and binds the substrate succinate, while the binding sites for coenzyme A and phosphate are found in the alpha subunit. This Streptomyces coelicolor (strain ATCC BAA-471 / A3(2) / M145) protein is Succinate--CoA ligase [ADP-forming] subunit beta 1.